The following is a 122-amino-acid chain: Large ribosomal subunit protein uL18 (122 aa).

This sequence belongs to the universal ribosomal protein uL18 family. In terms of assembly, part of the 50S ribosomal subunit; part of the 5S rRNA/L5/L18/L25 subcomplex. Contacts the 5S and 23S rRNAs.

Its function is as follows. This is one of the proteins that bind and probably mediate the attachment of the 5S RNA into the large ribosomal subunit, where it forms part of the central protuberance. The polypeptide is Large ribosomal subunit protein uL18 (Fervidobacterium nodosum (strain ATCC 35602 / DSM 5306 / Rt17-B1)).